The primary structure comprises 187 residues: Calcium and integrin-binding family member 2 (187 aa).

EF-hand domains lie at 66-101 (KENP…LSEM), 103-138 (PREL…LTKE), and 144-179 (EVNL…APDF). Asp157, Asp159, Asp161, Lys163, and Asp168 together coordinate Ca(2+).

Monomer. Homodimer. Enriched in central and striolar hair cells.

It localises to the cytoplasm. Its subcellular location is the cell projection. It is found in the stereocilium. The protein localises to the photoreceptor inner segment. The protein resides in the cilium. It localises to the photoreceptor outer segment. Its subcellular location is the cell membrane. It is found in the sarcolemma. Calcium- and integrin-binding protein. Plays a role in intracellular calcium homeostasis. Critical for proper photoreceptor cell maintenance and function. Essential for development, maintenance and function of mechanosensory hair cells. The protein is Calcium and integrin-binding family member 2 of Danio rerio (Zebrafish).